A 704-amino-acid chain; its full sequence is Ubiquitin-like modifier-activating enzyme atg7 (704 aa).

Residues 372 to 377 carry the GXGXXG motif motif; the sequence is GAGTLG. Cys-555 (glycyl thioester intermediate) is an active-site residue. The segment at 660-699 is homodimerization; that stretch reads ALTEKDYITELSGLAEVQRKAEAAANDVEWDSDEEGMEDE. The segment at 682-704 is disordered; it reads AAANDVEWDSDEEGMEDEEPELL. Over residues 687–704 the composition is skewed to acidic residues; that stretch reads VEWDSDEEGMEDEEPELL.

This sequence belongs to the ATG7 family. As to quaternary structure, homodimer. Interacts with ATG8 through a thioester bond between Cys-555 and the C-terminal Gly of ATG8 and with ATG12 through a thioester bond between Cys-555 and the C-terminal Gly of ATG12. Also interacts with ATG3.

The protein resides in the cytoplasm. The protein localises to the preautophagosomal structure. In terms of biological role, E1-like activating enzyme involved in the 2 ubiquitin-like systems required for cytoplasm to vacuole transport (Cvt) and autophagy. Activates ATG12 for its conjugation with ATG5 and ATG8 for its conjugation with phosphatidylethanolamine. Both systems are needed for the ATG8 association to Cvt vesicles and autophagosomes membranes. Autophagy is essential for maintenance of amino acid levels and protein synthesis under nitrogen starvation. Required for selective autophagic degradation of the nucleus (nucleophagy) as well as for mitophagy which contributes to regulate mitochondrial quantity and quality by eliminating the mitochondria to a basal level to fulfill cellular energy requirements and preventing excess ROS production. Required for normal mycelial growth and conidiogenesis, and regulates sclerotial formation. Plays an essential role in pathogenesis. This is Ubiquitin-like modifier-activating enzyme atg7 from Botryotinia fuckeliana (strain T4) (Noble rot fungus).